The chain runs to 337 residues: Anthranilate phosphoribosyltransferase (337 aa).

5-phospho-alpha-D-ribose 1-diphosphate contacts are provided by residues Gly82, 85–86 (GD), Thr90, 92–95 (NIST), 110–118 (KHGGRSVSS), and Ser122. Gly82 lines the anthranilate pocket. Residue Ser94 coordinates Mg(2+). Residue Arg168 coordinates anthranilate. Residues Asp226 and Glu227 each contribute to the Mg(2+) site.

Belongs to the anthranilate phosphoribosyltransferase family. In terms of assembly, homodimer. Requires Mg(2+) as cofactor.

The enzyme catalyses N-(5-phospho-beta-D-ribosyl)anthranilate + diphosphate = 5-phospho-alpha-D-ribose 1-diphosphate + anthranilate. Its pathway is amino-acid biosynthesis; L-tryptophan biosynthesis; L-tryptophan from chorismate: step 2/5. Its function is as follows. Catalyzes the transfer of the phosphoribosyl group of 5-phosphorylribose-1-pyrophosphate (PRPP) to anthranilate to yield N-(5'-phosphoribosyl)-anthranilate (PRA). The chain is Anthranilate phosphoribosyltransferase from Francisella tularensis subsp. tularensis (strain WY96-3418).